A 434-amino-acid polypeptide reads, in one-letter code: Quinolone resistance transporter (434 aa).

12 helical membrane-spanning segments follow: residues 15–35 (LIPA…AVGF), 45–65 (GIGD…YFLF), 85–105 (ILLT…PKSF), 110–130 (FLLG…ITQW), 142–162 (MFVL…GLLL), 175–195 (WLFV…FLWL), 241–261 (VLLL…LNLW), 275–295 (IQIG…LLII), 306–326 (YGHL…SGWL), 333–353 (LAAL…FWTL), 367–387 (IALI…GIGL), and 396–416 (AAGL…TYIV).

This sequence belongs to the major facilitator superfamily.

It localises to the cell inner membrane. Its function is as follows. Efflux pump that mediates resistance to quinolone-type antibiotics. The protein is Quinolone resistance transporter of Acinetobacter baumannii.